The following is a 289-amino-acid chain: MQSNLLAVLFALASALTIAWGTVVRHRIALRTPKDGSLRSSPLLNALMTPMWWAGMSTAMLAYFLQTVALGFGTLLVVQPVLVLSLMFTLPLSARFNGYRLRRTEIFWATLLTVAVGIMIVLGRPLPGNPHPPLDRWIPVLLVGVAVMGGMWLLAEYVLKKDKALILGLVTGALFGYVAVMSKAAVDLFVHQGITGLILNWEGYGLILTALLGTIVQQYSFNAGELQKSLPAMTIAEPIVAFSLGYLVLGEKFQVVDWEWIAMGIALLVMIVSTIALSRTSTMPAGSKR.

9 consecutive transmembrane segments (helical) span residues 4-24 (NLLA…GTVV), 44-64 (LNAL…LAYF), 68-88 (VALG…SLMF), 106-126 (IFWA…GRPL), 138-158 (IPVL…AEYV), 166-186 (ILGL…KAAV), 196-216 (GLIL…GTIV), 230-250 (LPAM…LVLG), and 258-278 (WEWI…IALS).

The protein localises to the cell membrane. This is an uncharacterized protein from Corynebacterium glutamicum (strain ATCC 13032 / DSM 20300 / JCM 1318 / BCRC 11384 / CCUG 27702 / LMG 3730 / NBRC 12168 / NCIMB 10025 / NRRL B-2784 / 534).